A 256-amino-acid chain; its full sequence is Astacin-like metalloprotease toxin 2 (256 aa).

Positions 1–24 are cleaved as a signal peptide; that stretch reads MIPDVGFLVLLTGALFICIKAAPA. The propeptide occupies 25–52; sequence TTDVDPTFEGRIVMEGDILIREEQLTER. The Peptidase M12A domain occupies 53 to 250; that stretch reads NAIALENMRW…KKINTLYNCP (198 aa). Cystine bridges form between cysteine 94-cysteine 249 and cysteine 117-cysteine 136. Residue histidine 144 coordinates Zn(2+). Glutamate 145 is an active-site residue. 2 residues coordinate Zn(2+): histidine 148 and histidine 154.

Monomer. It depends on Zn(2+) as a cofactor. In terms of tissue distribution, expressed by the venom gland.

Its subcellular location is the secreted. With respect to regulation, inhibited by 1,10-phenanthroline. Functionally, zinc metalloprotease. Provoques deadhesion of endothelial cells from cell cultures, and also degradation of fibronectin, fibrinogen and gelatin in vitro. Its role in the venom is not fully understood but it might act as a spreading factor that facilitates diffusion of other venom toxins. Alternatively, it might be involved in the proteolytic processing of other venom toxins or it might play a role in extra-oral digestion of prey. This chain is Astacin-like metalloprotease toxin 2, found in Loxosceles intermedia (Brown spider).